The chain runs to 235 residues: 7-carboxy-7-deazaguanine synthase (235 aa).

Residues 27–29 (LQG) and arginine 42 each bind substrate. Residues 33–235 (FSGQPSVFVR…VQVHKILKIA (203 aa)) form the Radical SAM core domain. Residues cysteine 46, cysteine 50, and cysteine 53 each coordinate [4Fe-4S] cluster. Residue threonine 55 participates in Mg(2+) binding. Threonine 87 contributes to the substrate binding site. S-adenosyl-L-methionine-binding positions include glycine 89 and 133–135 (SPK).

The protein belongs to the radical SAM superfamily. 7-carboxy-7-deazaguanine synthase family. Homodimer. Requires [4Fe-4S] cluster as cofactor. S-adenosyl-L-methionine is required as a cofactor. Mg(2+) serves as cofactor.

It catalyses the reaction 6-carboxy-5,6,7,8-tetrahydropterin + H(+) = 7-carboxy-7-deazaguanine + NH4(+). The protein operates within purine metabolism; 7-cyano-7-deazaguanine biosynthesis. In terms of biological role, catalyzes the complex heterocyclic radical-mediated conversion of 6-carboxy-5,6,7,8-tetrahydropterin (CPH4) to 7-carboxy-7-deazaguanine (CDG), a step common to the biosynthetic pathways of all 7-deazapurine-containing compounds. The polypeptide is 7-carboxy-7-deazaguanine synthase (Rhodospirillum rubrum (strain ATCC 11170 / ATH 1.1.1 / DSM 467 / LMG 4362 / NCIMB 8255 / S1)).